The primary structure comprises 81 residues: Gamma-conotoxin-like TxMEKL-0511 (81 aa).

Residues 1–19 (MEKLTILLLVAAVLLSIQA) form the signal peptide. Residues 20-45 (LNQEKHQRAKINLLSKRKPPAERWWR) constitute a propeptide that is removed on maturation. Cystine bridges form between C49–C63, C56–C67, and C62–C72.

Belongs to the conotoxin O2 superfamily. As to expression, expressed by the venom duct.

Its subcellular location is the secreted. Its function is as follows. Gamma-conotoxins may act on voltage-gated non-specific cation pacemaker channels (HCN). The sequence is that of Gamma-conotoxin-like TxMEKL-0511 from Conus textile (Cloth-of-gold cone).